The primary structure comprises 280 residues: Putative pyruvate, phosphate dikinase regulatory protein (280 aa).

Residue Gly156–Thr163 coordinates ADP.

The protein belongs to the pyruvate, phosphate/water dikinase regulatory protein family. PDRP subfamily.

The catalysed reaction is N(tele)-phospho-L-histidyl/L-threonyl-[pyruvate, phosphate dikinase] + ADP = N(tele)-phospho-L-histidyl/O-phospho-L-threonyl-[pyruvate, phosphate dikinase] + AMP + H(+). It catalyses the reaction N(tele)-phospho-L-histidyl/O-phospho-L-threonyl-[pyruvate, phosphate dikinase] + phosphate + H(+) = N(tele)-phospho-L-histidyl/L-threonyl-[pyruvate, phosphate dikinase] + diphosphate. Bifunctional serine/threonine kinase and phosphorylase involved in the regulation of the pyruvate, phosphate dikinase (PPDK) by catalyzing its phosphorylation/dephosphorylation. This is Putative pyruvate, phosphate dikinase regulatory protein from Hyphomonas neptunium (strain ATCC 15444).